The primary structure comprises 672 residues: UvrABC system protein B (672 aa).

Residues 26-181 (AGLEDGLAYQ…ILQRLAELQY (156 aa)) enclose the Helicase ATP-binding domain. Position 39 to 46 (39 to 46 (GVTGSGKT)) interacts with ATP. The short motif at 92-115 (YYDYYQPEAYVPSSDTYIEKDASI) is the Beta-hairpin element. The region spanning 430–592 (QVDDLLSEIK…ITPKSIQKAV (163 aa)) is the Helicase C-terminal domain. One can recognise a UVR domain in the interval 631-666 (AKELRKLEEQMYHHARNLEFEEAAAVRDKIQHIRKG).

The protein belongs to the UvrB family. As to quaternary structure, forms a heterotetramer with UvrA during the search for lesions. Interacts with UvrC in an incision complex.

It localises to the cytoplasm. In terms of biological role, the UvrABC repair system catalyzes the recognition and processing of DNA lesions. A damage recognition complex composed of 2 UvrA and 2 UvrB subunits scans DNA for abnormalities. Upon binding of the UvrA(2)B(2) complex to a putative damaged site, the DNA wraps around one UvrB monomer. DNA wrap is dependent on ATP binding by UvrB and probably causes local melting of the DNA helix, facilitating insertion of UvrB beta-hairpin between the DNA strands. Then UvrB probes one DNA strand for the presence of a lesion. If a lesion is found the UvrA subunits dissociate and the UvrB-DNA preincision complex is formed. This complex is subsequently bound by UvrC and the second UvrB is released. If no lesion is found, the DNA wraps around the other UvrB subunit that will check the other stand for damage. The polypeptide is UvrABC system protein B (Coxiella burnetii (strain CbuK_Q154) (Coxiella burnetii (strain Q154))).